Consider the following 322-residue polypeptide: Hydrolase C26A3.11 (322 aa).

One can recognise a CN hydrolase domain in the interval 44-290; sequence FRIGLVQLAN…PSIVYADIDP (247 aa). Glu-83 (proton acceptor) is an active-site residue. The active-site Proton donor is the Lys-154. Residue Cys-195 is the Nucleophile of the active site.

This sequence belongs to the carbon-nitrogen hydrolase superfamily. NIT1/NIT2 family.

In Schizosaccharomyces pombe (strain 972 / ATCC 24843) (Fission yeast), this protein is Hydrolase C26A3.11.